Here is a 133-residue protein sequence, read N- to C-terminus: Minor spike protein H (133 aa).

The protein belongs to the microviridae H protein family.

The protein resides in the virion. Probably triggers with protein G the injection of the phage DNA into the host upon conformational changes induced by virus-host receptor interaction. This Spiroplasma virus 4 (SpV4) protein is Minor spike protein H.